The following is a 244-amino-acid chain: ATP synthase subunit a (244 aa).

7 consecutive transmembrane segments (helical) span residues 20–40 (FFDV…VIVI), 81–101 (GILF…LNVM), 113–133 (QLLV…IWGF), 140–160 (FLNI…LVFI), 176–196 (LFAN…AAIY), 202–222 (FIGI…LGIA), and 223–243 (FLQA…IINL).

The protein belongs to the ATPase A chain family. As to quaternary structure, F-type ATPases have 2 components, CF(1) - the catalytic core - and CF(0) - the membrane proton channel. CF(1) has five subunits: alpha(3), beta(3), gamma(1), delta(1), epsilon(1). CF(0) has three main subunits: a, b and c.

Its subcellular location is the mitochondrion inner membrane. Its function is as follows. Mitochondrial membrane ATP synthase (F(1)F(0) ATP synthase or Complex V) produces ATP from ADP in the presence of a proton gradient across the membrane which is generated by electron transport complexes of the respiratory chain. F-type ATPases consist of two structural domains, F(1) - containing the extramembraneous catalytic core and F(0) - containing the membrane proton channel, linked together by a central stalk and a peripheral stalk. During catalysis, ATP synthesis in the catalytic domain of F(1) is coupled via a rotary mechanism of the central stalk subunits to proton translocation. Key component of the proton channel; it may play a direct role in the translocation of protons across the membrane. In Dictyostelium citrinum (Slime mold), this protein is ATP synthase subunit a (atp6).